The following is a 467-amino-acid chain: H(+)/Cl(-) exchange transporter ClcA (467 aa).

The Cytoplasmic segment spans residues 1–30 (MTKRERIIQSVLVKVPKDAINQFLSHGSTP). A helical transmembrane segment spans residues 31 to 67 (ISVLFLAALVGVLAGLVGTYFEIAVHFVSETRTEWLK). Topologically, residues 68 to 74 (SEIGHLL) are periplasmic. Residues 75–98 (PLWLAAILISAALAFVGYFLVHRF) traverse the membrane as a helical segment. The short motif at 104–108 (GSGIP) is the Selectivity filter part_1 element. Serine 105 provides a ligand contact to chloride. The segment at residues 107–114 (IPEIEGAM) is an intramembrane region (helical). The Cytoplasmic segment spans residues 115–121 (DNIRPVR). The next 2 helical transmembrane spans lie at 122-139 (WWRV…ALGS) and 146-164 (EGPT…TDIF). Positions 144–148 (GREGP) match the Selectivity filter part_2 motif. Over 165–174 (RVKDDDTRHS) the chain is Cytoplasmic. 2 intramembrane regions (helical) span residues 175–187 (LLAS…LAAA) and 191–199 (PLAGIMFVV). Topologically, residues 200 to 212 (EEMRPQFRYSLIS) are cytoplasmic. Residues 213 to 230 (IRAVIISAVMANIVFRAI) traverse the membrane as a helical segment. Residues 231–250 (NGQDAVITMPQYQPPELKAL) lie on the Periplasmic side of the membrane. The chain crosses the membrane as a helical span at residues 251 to 279 (WLFLLLGGLFGVFGVLFNKLVTVAQDAFV). Topologically, residues 280–285 (ALHKND) are cytoplasmic. A helical transmembrane segment spans residues 286–307 (RKRYLITGTCLGGIFGLLLLYV). The Periplasmic portion of the chain corresponds to 308–327 (PELTGGGIHLIPDVTNGNYS). A run of 2 helical transmembrane segments spans residues 328 to 347 (VSLL…ICFG) and 353 to 374 (GIFA…ATAK). The short motif at 353–357 (GIFAP) is the Selectivity filter part_3 element. Positions 354 and 355 each coordinate chloride. The Periplasmic portion of the chain corresponds to 375–384 (ILLPDLPIEP). An intramembrane region (helical) is located at residues 385-399 (GMFAIAGMGALFAAT). The segment at residues 400-402 (VRA) is an intramembrane region (note=Loop between two helices). The helical intramembrane region spans 403-414 (PITGILLVIEMT). An intramembrane region (note=Loop between two helices) is located at residues 415 to 419 (NNYYL). A helical transmembrane segment spans residues 420-436 (ILPLIITSLGAVICAQI). The Cytoplasmic portion of the chain corresponds to 437 to 467 (CGGKPIYSQLLHRTIKNDKLRQQDLPEQQNS). Tyrosine 443 lines the chloride pocket.

The protein belongs to the chloride channel (TC 2.A.49) family. ClcA subfamily. As to quaternary structure, homodimer.

The protein resides in the cell inner membrane. It carries out the reaction 2 chloride(in) + H(+)(out) = 2 chloride(out) + H(+)(in). Functionally, proton-coupled chloride transporter. Functions as antiport system and exchanges two chloride ions for 1 proton. Probably acts as an electrical shunt for an outwardly-directed proton pump that is linked to amino acid decarboxylation, as part of the extreme acid resistance (XAR) response. This is H(+)/Cl(-) exchange transporter ClcA from Vibrio vulnificus (strain CMCP6).